Reading from the N-terminus, the 246-residue chain is Submandibular gland secretory Glx-rich protein CA (246 aa).

The first 18 residues, 1-18, serve as a signal peptide directing secretion; it reads MLVVLLTAALLALSSAQG. The interval 14–223 is disordered; that stretch reads SSAQGTDEEV…SGRPKKPLLP (210 aa). Composition is skewed to low complexity over residues 39–50, 58–71, 81–93, 104–116, 127–141, 150–159, and 178–196; these read PVDSGSDPPSAD, EGESAAPANEEPPA, QQEPTQAENQEPP, QQEPTQAEDQQPPAT, QQESTQAENQ, and VESPPSSPENSQEQPQQTN. Repeat copies occupy residues 67–89, 90–112, 113–135, 136–158, and 159–181. The tract at residues 67-181 is 5 X 23 AA tandem repeats; that stretch reads EEPPATSGSE…QPEEGNVESP (115 aa). A compositionally biased stretch (basic and acidic residues) spans 197-216; the sequence is PEEKPPAPKTQEEPQHDSGR.

As to expression, submandibular gland acinar cells.

The protein localises to the secreted. In terms of biological role, GRP proteins have a marked affinity for hydroxyapatite. They may play a role in the formation of the protective acquired pellicle at the saliva-tooth interface. In Rattus norvegicus (Rat), this protein is Submandibular gland secretory Glx-rich protein CA (Grpca).